The chain runs to 189 residues: Cell division protein SepF (189 aa).

A disordered region spans residues 18–64 (EVTDHEDVAKERPVKVQKTEQTPSQQQRKPERPQETVPPRRQHIKSD). Residues 22 to 35 (HEDVAKERPVKVQK) show a composition bias toward basic and acidic residues.

Belongs to the SepF family. In terms of assembly, homodimer. Interacts with FtsZ.

It is found in the cytoplasm. Functionally, cell division protein that is part of the divisome complex and is recruited early to the Z-ring. Probably stimulates Z-ring formation, perhaps through the cross-linking of FtsZ protofilaments. Its function overlaps with FtsA. The protein is Cell division protein SepF of Streptococcus thermophilus (strain ATCC BAA-250 / LMG 18311).